A 154-amino-acid polypeptide reads, in one-letter code: Protein-export protein SecB (154 aa).

This sequence belongs to the SecB family. Homotetramer, a dimer of dimers. One homotetramer interacts with 1 SecA dimer.

The protein localises to the cytoplasm. Functionally, one of the proteins required for the normal export of preproteins out of the cell cytoplasm. It is a molecular chaperone that binds to a subset of precursor proteins, maintaining them in a translocation-competent state. It also specifically binds to its receptor SecA. This is Protein-export protein SecB from Blochmanniella pennsylvanica (strain BPEN).